The following is a 64-amino-acid chain: Large ribosomal subunit protein bL35 (64 aa).

Disordered regions lie at residues 1–22 and 34–64; these read MPKAKTHSGASKRFRRTGTGKI and EHKPSTRTRRLDGHTRVSANDTQRVNSLLNG. A compositionally biased stretch (basic and acidic residues) spans 34 to 48; the sequence is EHKPSTRTRRLDGHT. The span at 50 to 64 shows a compositional bias: polar residues; sequence VSANDTQRVNSLLNG.

It belongs to the bacterial ribosomal protein bL35 family.

The protein is Large ribosomal subunit protein bL35 of Mycobacterium leprae (strain Br4923).